Here is a 178-residue protein sequence, read N- to C-terminus: Cytochrome b6-f complex iron-sulfur subunit (178 aa).

Residues 20-42 (LLTFGTATGVALGALYPVANYFM) form a helical membrane-spanning segment. One can recognise a Rieske domain in the interval 65 to 161 (KTGWLASHQA…VDVDDDAVLV (97 aa)). [2Fe-2S] cluster contacts are provided by cysteine 107, histidine 109, cysteine 125, and histidine 128. A disulfide bridge links cysteine 112 with cysteine 127.

Belongs to the Rieske iron-sulfur protein family. The 4 large subunits of the cytochrome b6-f complex are cytochrome b6, subunit IV (17 kDa polypeptide, PetD), cytochrome f and the Rieske protein, while the 4 small subunits are PetG, PetL, PetM and PetN. The complex functions as a dimer. [2Fe-2S] cluster serves as cofactor.

It localises to the cellular thylakoid membrane. It carries out the reaction 2 oxidized [plastocyanin] + a plastoquinol + 2 H(+)(in) = 2 reduced [plastocyanin] + a plastoquinone + 4 H(+)(out). Functionally, component of the cytochrome b6-f complex, which mediates electron transfer between photosystem II (PSII) and photosystem I (PSI), cyclic electron flow around PSI, and state transitions. This Prochlorococcus marinus subsp. pastoris (strain CCMP1986 / NIES-2087 / MED4) protein is Cytochrome b6-f complex iron-sulfur subunit.